The primary structure comprises 193 residues: ATP synthase subunit b (193 aa).

Residues Pro-24–Trp-44 form a helical membrane-spanning segment.

This sequence belongs to the ATPase B chain family. As to quaternary structure, F-type ATPases have 2 components, F(1) - the catalytic core - and F(0) - the membrane proton channel. F(1) has five subunits: alpha(3), beta(3), gamma(1), delta(1), epsilon(1). F(0) has three main subunits: a(1), b(2) and c(10-14). The alpha and beta chains form an alternating ring which encloses part of the gamma chain. F(1) is attached to F(0) by a central stalk formed by the gamma and epsilon chains, while a peripheral stalk is formed by the delta and b chains.

It is found in the cell membrane. Functionally, f(1)F(0) ATP synthase produces ATP from ADP in the presence of a proton or sodium gradient. F-type ATPases consist of two structural domains, F(1) containing the extramembraneous catalytic core and F(0) containing the membrane proton channel, linked together by a central stalk and a peripheral stalk. During catalysis, ATP synthesis in the catalytic domain of F(1) is coupled via a rotary mechanism of the central stalk subunits to proton translocation. In terms of biological role, component of the F(0) channel, it forms part of the peripheral stalk, linking F(1) to F(0). The chain is ATP synthase subunit b from Parafrankia sp. (strain EAN1pec).